We begin with the raw amino-acid sequence, 524 residues long: DNA damage-binding protein CMR1 (524 aa).

The tract at residues 35–79 (EKIIPKPAPPKPKRASAPRAKREPVKRETARPTRQSSRLAGLDAD) is disordered. A compositionally biased stretch (basic and acidic residues) spans 54–65 (AKREPVKRETAR). WD repeat units lie at residues 184-225 (LVPQ…VKAE), 245-285 (THSR…STEA), 295-332 (LPIS…STAE), 336-376 (LTDQ…GKGD), 385-425 (THDS…KWTA), 447-490 (GRWV…LAQL), and 493-524 (DGIT…CLWM).

The protein belongs to the WD repeat DDB2/WDR76 family.

Functionally, DNA-binding protein that binds to both single- and double-stranded DNA. Binds preferentially to UV-damaged DNA. May be involved in DNA-metabolic processes. This is DNA damage-binding protein CMR1 from Chaetomium globosum (strain ATCC 6205 / CBS 148.51 / DSM 1962 / NBRC 6347 / NRRL 1970) (Soil fungus).